A 792-amino-acid polypeptide reads, in one-letter code: Kinesin-related protein 2 (792 aa).

Disordered stretches follow at residues Thr22–Thr50 and Asn162–Gln183. The segment covering Ala34–Thr50 has biased composition (polar residues). Residues Arg284–Val423 are a coiled coil. The 345-residue stretch at Asn437–Cys781 folds into the Kinesin motor domain. Gly528–Thr535 contacts ATP.

The protein belongs to the TRAFAC class myosin-kinesin ATPase superfamily. Kinesin family. NCD subfamily.

The protein resides in the nucleus. It is found in the cytoplasm. It localises to the cytoskeleton. Its subcellular location is the spindle. In terms of biological role, microtubule-dependent motor that is probably involved in microtubule organization in the mitotic spindle. This chain is Kinesin-related protein 2 (kif2), found in Dictyostelium discoideum (Social amoeba).